The sequence spans 231 residues: MIYLRKANERGHANHGWLDSWHTFSFANYYDPNFMGFSALRVINDDVIEAGQGFGTHPHKDMEILTYVLEGTVEHQDSMGNKEQVPAGEFQIMSAGTGIRHSEYNPSSTERLHLYQIWIMPEENGITPRYEQRRFDAVQGKQLVLSPDARDGSLKVHQDMELYRWALLKDEQSVHQIAAERRVWIQVVKGNVTINGVKASTSDGLAIWDEQAISIHADSDSEVLLFDLPPV.

Residues His-57, His-59, His-101, and Glu-103 each coordinate a divalent metal cation.

The protein belongs to the pirin family. Requires Zn(2+) as cofactor. It depends on Co(2+) as a cofactor. Fe(2+) is required as a cofactor.

The catalysed reaction is quercetin + O2 = 2-(3,4-dihydroxybenzoyloxy)-4,6-dihydroxybenzoate + CO. Its pathway is flavonoid metabolism; quercetin degradation. Inhibited by kojic acid, sodium diethyldithiocarbamate and 1,10-phenanthroline monohydrochloride. In terms of biological role, has quercetin 2,3-dioxygenase activity in vitro. Its physiological role is unknown; however, may provide a mechanism that would avoid inhibition of key cellular proteins, such as DNA gyrase, by quercetin. The chain is Quercetin 2,3-dioxygenase (yhhW) from Escherichia coli (strain K12).